The following is a 449-amino-acid chain: Hyaluronidase-4 (449 aa).

Positions 1-23 (MYHIWIKFLAAWIFLKRFNGVHV) are cleaved as a signal peptide. 2 disulfides stabilise this stretch: Cys-47/Cys-340 and Cys-211/Cys-227. N-linked (GlcNAc...) asparagine glycans are attached at residues Asn-67, Asn-103, and Asn-111. The Proton donor role is filled by Glu-135. An N-linked (GlcNAc...) asparagine glycan is attached at Asn-153. N-linked (GlcNAc...) asparagine glycosylation is present at Asn-357. 3 cysteine pairs are disulfide-bonded: Cys-365-Cys-376, Cys-370-Cys-427, and Cys-429-Cys-438. Residue Asn-401 is glycosylated (N-linked (GlcNAc...) asparagine). Residues 427 to 438 (CQCYQGWKGLYC) form the EGF-like domain.

The protein belongs to the glycosyl hydrolase 56 family. Monomer. Expressed by the venom gland.

The protein localises to the secreted. The enzyme catalyses Random hydrolysis of (1-&gt;4)-linkages between N-acetyl-beta-D-glucosamine and D-glucuronate residues in hyaluronate.. Functionally, snake venom endo-hyaluronidase that degrades hyaluronan to smaller oligosaccharide fragments. In venom, it is not toxic by itself, but increases the diffusion of other venom proteins by degrading the extracellular matrix. In addition, it displays antiedematogenic activity. The chain is Hyaluronidase-4 from Cerastes cerastes (Horned desert viper).